We begin with the raw amino-acid sequence, 116 residues long: Mitochondrial import inner membrane translocase subunit PAM16 like 2 (116 aa).

A mitochondrion-targeting transit peptide spans 1-27 (MAGRLLANLIVMGSGIIGRAVFQAYRQ). The interval 57-106 (EARQILGVTEKTSWEEILQKYDKLFENNAKAGSFYLQSKVHRAKECLEVV) is J-like.

Belongs to the TIM16/PAM16 family. Expressed constitutively and ubiquitously, except in root tips, at low levels.

Its subcellular location is the mitochondrion inner membrane. The protein localises to the cytoplasm. Its function is as follows. Regulates ATP-dependent protein translocation into the mitochondrial matrix. Involved in the uptake of thaxtomin, a phytotoxin produced by Streptomyces bacteria, that causes dramatic cell swelling, reduced seedling growth, and inhibition of cellulose synthesis. Modulates polar auxin transport. Involved in importing a negative regulator of plant immunity into mitochondria, thus protecting plants from over-accumulation of reactive oxygen species (ROS) and preventing autoimmunity. Confers sensitivity to virulent pathogens such as the oomycete H.arabidopsidis Noco2 and the bacteria P.syringae pv. maculicola ES4326. This chain is Mitochondrial import inner membrane translocase subunit PAM16 like 2, found in Arabidopsis thaliana (Mouse-ear cress).